The sequence spans 259 residues: Acetylglutamate kinase (259 aa).

Residues 45 to 46 (GG), arginine 67, and asparagine 159 each bind substrate.

The protein belongs to the acetylglutamate kinase family. ArgB subfamily.

The protein resides in the cytoplasm. It catalyses the reaction N-acetyl-L-glutamate + ATP = N-acetyl-L-glutamyl 5-phosphate + ADP. The protein operates within amino-acid biosynthesis; L-arginine biosynthesis; N(2)-acetyl-L-ornithine from L-glutamate: step 2/4. In terms of biological role, catalyzes the ATP-dependent phosphorylation of N-acetyl-L-glutamate. The sequence is that of Acetylglutamate kinase from Aeromonas hydrophila subsp. hydrophila (strain ATCC 7966 / DSM 30187 / BCRC 13018 / CCUG 14551 / JCM 1027 / KCTC 2358 / NCIMB 9240 / NCTC 8049).